The chain runs to 936 residues: Protein translocase subunit SecA (936 aa).

Residues glutamine 87, glycine 105–threonine 109, and aspartate 515 contribute to the ATP site. Residues cysteine 920, cysteine 922, cysteine 931, and histidine 932 each contribute to the Zn(2+) site.

The protein belongs to the SecA family. In terms of assembly, monomer and homodimer. Part of the essential Sec protein translocation apparatus which comprises SecA, SecYEG and auxiliary proteins SecDF-YajC and YidC. Zn(2+) serves as cofactor.

The protein resides in the cell inner membrane. It localises to the cytoplasm. The enzyme catalyses ATP + H2O + cellular proteinSide 1 = ADP + phosphate + cellular proteinSide 2.. Part of the Sec protein translocase complex. Interacts with the SecYEG preprotein conducting channel. Has a central role in coupling the hydrolysis of ATP to the transfer of proteins into and across the cell membrane, serving both as a receptor for the preprotein-SecB complex and as an ATP-driven molecular motor driving the stepwise translocation of polypeptide chains across the membrane. The protein is Protein translocase subunit SecA of Paraburkholderia phymatum (strain DSM 17167 / CIP 108236 / LMG 21445 / STM815) (Burkholderia phymatum).